The chain runs to 161 residues: Urocortin-3 (161 aa).

The first 21 residues, 1–21, serve as a signal peptide directing secretion; it reads MLMPVHFLLLLLLLLGGPRTG. Residues 22–118 constitute a propeptide that is removed on maturation; sequence LPHKFYKAKP…QDTAKSPHRT (97 aa). A disordered region spans residues 64–118; that stretch reads SRDASSGEEEEGKEKKTFPISGARGGARGTRYRYVSQAQPRGKPRQDTAKSPHRT. I157 bears the Isoleucine amide mark.

The protein belongs to the sauvagine/corticotropin-releasing factor/urotensin I family. Binds with high affinity to CRF receptors 2-alpha and 2-beta.

The protein resides in the secreted. Functionally, suppresses food intake, delays gastric emptying and decreases heat-induced edema. Might represent an endogenous ligand for maintaining homeostasis after stress. This is Urocortin-3 (UCN3) from Homo sapiens (Human).